The chain runs to 249 residues: 2,3-bisphosphoglycerate-dependent phosphoglycerate mutase (249 aa).

Substrate is bound by residues 10–17 (RHGESEWN), 23–24 (TG), R62, 89–92 (ERHY), K100, 116–117 (RR), and 185–186 (GN). H11 (tele-phosphohistidine intermediate) is an active-site residue. E89 acts as the Proton donor/acceptor in catalysis.

It belongs to the phosphoglycerate mutase family. BPG-dependent PGAM subfamily. In terms of assembly, homodimer.

It catalyses the reaction (2R)-2-phosphoglycerate = (2R)-3-phosphoglycerate. It functions in the pathway carbohydrate degradation; glycolysis; pyruvate from D-glyceraldehyde 3-phosphate: step 3/5. Its function is as follows. Catalyzes the interconversion of 2-phosphoglycerate and 3-phosphoglycerate. In Hamiltonella defensa subsp. Acyrthosiphon pisum (strain 5AT), this protein is 2,3-bisphosphoglycerate-dependent phosphoglycerate mutase.